The sequence spans 158 residues: Phosphopantetheine adenylyltransferase (158 aa).

Residue Thr-10 coordinates substrate. ATP contacts are provided by residues 10-11 (TF) and His-18. Substrate is bound by residues Lys-42, Leu-74, and Arg-88. Residues 89–91 (GIR), Glu-99, and 124–130 (WRYLSST) each bind ATP.

This sequence belongs to the bacterial CoaD family. Homohexamer. Mg(2+) serves as cofactor.

It localises to the cytoplasm. It catalyses the reaction (R)-4'-phosphopantetheine + ATP + H(+) = 3'-dephospho-CoA + diphosphate. Its pathway is cofactor biosynthesis; coenzyme A biosynthesis; CoA from (R)-pantothenate: step 4/5. Functionally, reversibly transfers an adenylyl group from ATP to 4'-phosphopantetheine, yielding dephospho-CoA (dPCoA) and pyrophosphate. This chain is Phosphopantetheine adenylyltransferase, found in Actinobacillus pleuropneumoniae serotype 7 (strain AP76).